The chain runs to 434 residues: MSTASTTHTQTDALQSDDLAAQCVDIARRAKAASRLLGTLDTNIKDQWLIESADALIEASDAIIAANQLDLENAPKYGLTDAGIDRLRLDEARIAGIATGLREIASLNDPIGEVLDGFARPGGMRIEKRRVPLGVVFFIYESRPNVTADAAGICVKSGNAVILRGGKEAAHSSRAIIEVLHEVGRRVGIPDDAVQLVGTTDRAAVGHFLKQSDNIDVTIPRGGENLIRRVAAEATMPVIKHYDGNCHVYVDESADIEMAVDIIENAKCQRMGVCNACESLLIHQSIAADALPAIAKRLASRGVEMRVDERASAYVPDGVPATDADFAAEFLGPQISIAVVDSLAAATDHINHYGSGHTDAIVTSNIAASEQFTALVDSSAVMVNASTRFNDGGMFGLGAEIGISTDKFHARGPCGLRELTSYKYIVRGNGHIRG.

The protein belongs to the gamma-glutamyl phosphate reductase family.

Its subcellular location is the cytoplasm. The enzyme catalyses L-glutamate 5-semialdehyde + phosphate + NADP(+) = L-glutamyl 5-phosphate + NADPH + H(+). It participates in amino-acid biosynthesis; L-proline biosynthesis; L-glutamate 5-semialdehyde from L-glutamate: step 2/2. Functionally, catalyzes the NADPH-dependent reduction of L-glutamate 5-phosphate into L-glutamate 5-semialdehyde and phosphate. The product spontaneously undergoes cyclization to form 1-pyrroline-5-carboxylate. The chain is Gamma-glutamyl phosphate reductase from Rhodopirellula baltica (strain DSM 10527 / NCIMB 13988 / SH1).